The following is a 272-amino-acid chain: Insulin-like growth factor-binding protein 1 (272 aa).

The N-terminal stretch at 1–25 (MPEVPAAGLWPFLLLLAVQVSTVAS) is a signal peptide. Positions 28–109 (QPWHCAPCSA…TRGQGACVPE (82 aa)) constitute an IGFBP N-terminal domain. Intrachain disulfides connect Cys-32–Cys-59, Cys-35–Cys-61, Cys-43–Cys-62, Cys-50–Cys-65, and Cys-73–Cys-86. Ser-139, Ser-157, and Ser-169 each carry phosphoserine. Thr-170 carries the post-translational modification Phosphothreonine. Tyr-171 is subject to Phosphotyrosine. Residues 186 to 264 (KQPCRRELYK…SLEIRGDPNC (79 aa)) enclose the Thyroglobulin type-1 domain. 3 cysteine pairs are disulfide-bonded: Cys-189–Cys-219, Cys-230–Cys-241, and Cys-243–Cys-264. The residue at position 255 (Ser-255) is a Phosphoserine. Residues 259–261 (RGD) carry the Cell attachment site motif.

Binds equally well IGF1 and IGF2. Interacts with integrin ITGA5:ITGB1. Interacts with VHL; this interaction inhibits HIF1A degradation.

The protein localises to the secreted. In terms of biological role, multifunctional protein that plays a critical role in regulating the availability of IGFs such as IGF1 and IGF2 to their receptors and thereby regulates IGF-mediated cellular processes including cell migration, proliferation, differentiation or apoptosis in a cell-type specific manner. Also plays a positive role in cell migration by interacting with integrin ITGA5:ITGB1 through its RGD motif. Mechanistically, binding to integrins leads to activation of focal adhesion kinase/PTK2 and stimulation of the mitogen-activated protein kinase (MAPK) pathway. Regulates cardiomyocyte apoptosis by suppressing HIF-1alpha/HIF1A degradation through ubiquitination. In Ictidomys tridecemlineatus (Thirteen-lined ground squirrel), this protein is Insulin-like growth factor-binding protein 1 (IGFBP1).